The primary structure comprises 1740 residues: Vitamin B12-dependent ribonucleoside-diphosphate reductase (1740 aa).

The ATP-cone domain occupies 4–96 (EKVMKRDGRI…LYRKKKAEIR (93 aa)). Residues T257, 272 to 273 (AC), and G301 each bind substrate. The cysteines at positions 273 and 1308 are disulfide-linked. In terms of domain architecture, DOD-type homing endonuclease 1 spans 443–582 (LAGFIAGDGC…VTHYLNALGI (140 aa)). The Proton acceptor role is filled by N913. 913 to 914 (NP) serves as a coordination point for substrate. A DOD-type homing endonuclease 2 domain is found at 1063 to 1194 (VLGWFIGDGY…VQDLLLLFGI (132 aa)). C1297 (cysteine radical intermediate) is an active-site residue. Substrate-binding positions include 1297 to 1299 (CGE) and 1471 to 1475 (PTGSV). E1299 acts as the Proton acceptor in catalysis.

This sequence belongs to the ribonucleoside diphosphate reductase class-2 family. Requires adenosylcob(III)alamin as cofactor. Post-translationally, this protein undergoes a protein self splicing that involves a post-translational excision of the intervening region (intein) followed by peptide ligation.

It catalyses the reaction a 2'-deoxyribonucleoside 5'-diphosphate + [thioredoxin]-disulfide + H2O = a ribonucleoside 5'-diphosphate + [thioredoxin]-dithiol. Functionally, provides the precursors necessary for DNA synthesis. Catalyzes the biosynthesis of deoxyribonucleotides from the corresponding ribonucleotides. The protein is Vitamin B12-dependent ribonucleoside-diphosphate reductase (rnr) of Pyrococcus furiosus (strain ATCC 43587 / DSM 3638 / JCM 8422 / Vc1).